Consider the following 872-residue polypeptide: Alanine--tRNA ligase (872 aa).

Zn(2+) is bound by residues His-567, His-571, Cys-669, and His-673.

The protein belongs to the class-II aminoacyl-tRNA synthetase family. The cofactor is Zn(2+).

It localises to the cytoplasm. It catalyses the reaction tRNA(Ala) + L-alanine + ATP = L-alanyl-tRNA(Ala) + AMP + diphosphate. In terms of biological role, catalyzes the attachment of alanine to tRNA(Ala) in a two-step reaction: alanine is first activated by ATP to form Ala-AMP and then transferred to the acceptor end of tRNA(Ala). Also edits incorrectly charged Ser-tRNA(Ala) and Gly-tRNA(Ala) via its editing domain. In Streptococcus thermophilus (strain ATCC BAA-491 / LMD-9), this protein is Alanine--tRNA ligase.